The sequence spans 327 residues: Cell surface glycoprotein CD200 receptor 1 (327 aa).

Positions 1 to 23 are cleaved as a signal peptide; sequence MLCFWRTSHVAVLLIWGVFAAES. Residues 24–239 lie on the Extracellular side of the membrane; it reads SCPDKNQTMQ…GRGGDQLLGS (216 aa). An Ig-like V-type domain is found at 26 to 145; that stretch reads PDKNQTMQNN…GNFQNIYDLQ (120 aa). N29, N34, N43, N96, N159, N187, N192, and N222 each carry an N-linked (GlcNAc...) asparagine glycan. 2 disulfides stabilise this stretch: C58–C129 and C81–C97. The Ig-like C2-type domain occupies 147-226; sequence LVPPEVTHFP…HLTTGNQSLS (80 aa). Cystine bridges form between C164–C213 and C183–C201. Residues 240 to 260 traverse the membrane as a helical segment; it reads YIQYIIPSIIILIIIGCICLL. At 261–327 the chain is on the cytoplasmic side; that stretch reads KISGCRKCKL…DCLTLSAMGI (67 aa).

This sequence belongs to the CD200R family. In terms of assembly, CD200 and CD200R1 interact via their respective N-terminal Ig-like domains. Phosphorylated on tyrosine residues. In terms of processing, highly N-glycosylated. Restricted to cells of the myeloid lineage.

The protein resides in the cell membrane. Inhibitory receptor for the CD200/OX2 cell surface glycoprotein. Limits inflammation by inhibiting the expression of pro-inflammatory molecules including TNF-alpha, interferons, and inducible nitric oxide synthase (iNOS) in response to selected stimuli. In Rattus norvegicus (Rat), this protein is Cell surface glycoprotein CD200 receptor 1 (Cd200r1).